The chain runs to 288 residues: Polyamine aminopropyltransferase (288 aa).

Residues 9–242 (SEWLDEYHQG…GLWSWTFASM (234 aa)) form the PABS domain. Q36 serves as a coordination point for S-methyl-5'-thioadenosine. 2 residues coordinate spermidine: H67 and D91. S-methyl-5'-thioadenosine is bound by residues E111 and 143–144 (NG). The active-site Proton acceptor is D162. P169 contributes to the S-methyl-5'-thioadenosine binding site.

It belongs to the spermidine/spermine synthase family. Homodimer or homotetramer.

It localises to the cytoplasm. The enzyme catalyses S-adenosyl 3-(methylsulfanyl)propylamine + putrescine = S-methyl-5'-thioadenosine + spermidine + H(+). It functions in the pathway amine and polyamine biosynthesis; spermidine biosynthesis; spermidine from putrescine: step 1/1. Functionally, catalyzes the irreversible transfer of a propylamine group from the amino donor S-adenosylmethioninamine (decarboxy-AdoMet) to putrescine (1,4-diaminobutane) to yield spermidine. This Prochlorococcus marinus (strain NATL2A) protein is Polyamine aminopropyltransferase.